The primary structure comprises 392 residues: tRNA (guanine(6)-N2)-methyltransferase (392 aa).

The region spanning 73 to 183 (SAIPLLNHFS…DSELFVGVDT (111 aa)) is the THUMP domain. S-adenosyl-L-methionine-binding positions include 199-203 (HPAHL), 230-232 (SGT), Glu-275, 303-304 (DA), and Asn-317.

This sequence belongs to the methyltransferase superfamily.

It localises to the cytoplasm. It carries out the reaction guanosine(6) in tRNA + S-adenosyl-L-methionine = N(2)-methylguanosine(6) in tRNA + S-adenosyl-L-homocysteine + H(+). In terms of biological role, S-adenosyl-L-methionine-dependent methyltransferase that catalyzes the methylation of the guanosine nucleotide at position 6 (m2G6) in tRNA. This is tRNA (guanine(6)-N2)-methyltransferase from Archaeoglobus fulgidus (strain ATCC 49558 / DSM 4304 / JCM 9628 / NBRC 100126 / VC-16).